Consider the following 400-residue polypeptide: Cytoplasmic tRNA 2-thiolation protein 2 (400 aa).

This sequence belongs to the CTU2/NCS2 family.

The protein resides in the cytoplasm. It functions in the pathway tRNA modification; 5-methoxycarbonylmethyl-2-thiouridine-tRNA biosynthesis. Functionally, plays a central role in 2-thiolation of mcm(5)S(2)U at tRNA wobble positions of tRNA(Lys), tRNA(Glu) and tRNA(Gln). May act by forming a heterodimer with NCS6/CTU1 that ligates sulfur from thiocarboxylated URM1 onto the uridine of tRNAs at wobble position. The protein is Cytoplasmic tRNA 2-thiolation protein 2 of Drosophila virilis (Fruit fly).